Here is a 156-residue protein sequence, read N- to C-terminus: Cell division protein SepF (156 aa).

This sequence belongs to the SepF family. Homodimer. Interacts with FtsZ.

It localises to the cytoplasm. In terms of biological role, cell division protein that is part of the divisome complex and is recruited early to the Z-ring. Probably stimulates Z-ring formation, perhaps through the cross-linking of FtsZ protofilaments. Its function overlaps with FtsA. The polypeptide is Cell division protein SepF (Ruminiclostridium cellulolyticum (strain ATCC 35319 / DSM 5812 / JCM 6584 / H10) (Clostridium cellulolyticum)).